A 464-amino-acid polypeptide reads, in one-letter code: tRNA modification GTPase MnmE (464 aa).

Residues Arg28, Glu90, and Arg129 each coordinate (6S)-5-formyl-5,6,7,8-tetrahydrofolate. In terms of domain architecture, TrmE-type G spans 226-385 (GLATAIVGRP…LEEKIAELFF (160 aa)). Asn236 lines the K(+) pocket. GTP contacts are provided by residues 236-241 (NVGKSS), 255-261 (TDIAGTT), and 280-283 (DTAG). A Mg(2+)-binding site is contributed by Ser240. K(+)-binding residues include Thr255, Ile257, and Thr260. Position 261 (Thr261) interacts with Mg(2+). Lys464 contacts (6S)-5-formyl-5,6,7,8-tetrahydrofolate.

Belongs to the TRAFAC class TrmE-Era-EngA-EngB-Septin-like GTPase superfamily. TrmE GTPase family. As to quaternary structure, homodimer. Heterotetramer of two MnmE and two MnmG subunits. K(+) is required as a cofactor.

The protein resides in the cytoplasm. Functionally, exhibits a very high intrinsic GTPase hydrolysis rate. Involved in the addition of a carboxymethylaminomethyl (cmnm) group at the wobble position (U34) of certain tRNAs, forming tRNA-cmnm(5)s(2)U34. The protein is tRNA modification GTPase MnmE of Ligilactobacillus salivarius (strain UCC118) (Lactobacillus salivarius).